The sequence spans 443 residues: Xaa-Pro dipeptidase (443 aa).

Positions 246, 257, 339, 384, and 423 each coordinate Mn(2+).

Belongs to the peptidase M24B family. Bacterial-type prolidase subfamily. It depends on Mn(2+) as a cofactor.

The catalysed reaction is Xaa-L-Pro dipeptide + H2O = an L-alpha-amino acid + L-proline. Splits dipeptides with a prolyl residue in the C-terminal position. This chain is Xaa-Pro dipeptidase, found in Edwardsiella ictaluri (strain 93-146).